Here is a 570-residue protein sequence, read N- to C-terminus: Structure-specific endonuclease subunit EME1 (570 aa).

Over residues 1–12 (MALKKSSPSLDS) the composition is skewed to low complexity. The segment at 1–42 (MALKKSSPSLDSGDSDSEELPTFAFLKKEPSSTKRRQPEREE) is disordered. 2 positions are modified to phosphoserine: Ser-12 and Ser-15. Residues 26-42 (LKKEPSSTKRRQPEREE) are compositionally biased toward basic and acidic residues. Phosphoserine occurs at positions 84, 85, and 87. A Glycyl lysine isopeptide (Lys-Gly) (interchain with G-Cter in SUMO2) cross-link involves residue Lys-103. Phosphoserine occurs at positions 111 and 117. Glycyl lysine isopeptide (Lys-Gly) (interchain with G-Cter in SUMO2) cross-links involve residues Lys-136 and Lys-141. A Phosphothreonine modification is found at Thr-150. 2 disordered regions span residues 187-233 (KTNS…ERKN) and 372-400 (AQNP…ASIG). A compositionally biased stretch (basic and acidic residues) spans 220-233 (RQKESTLRRQERKN). The tract at residues 250–456 (KHIIVVLDPV…PFKKLRDETT (207 aa)) is nuclease-like domain; forms the post-nick DNA binding interface and is involved in DNA recognition and bending. The helix-hairpin-helix (2HhH); forms the pre-nick DNA binding interface and is involved in DNA recognition and bending stretch occupies residues 476 to 570 (RGLALVWRRQ…QPHLSLDSAD (95 aa)).

This sequence belongs to the EME1/MMS4 family. Part of the heterodimeric MUS81-EME1 complex.

The protein resides in the nucleus. The protein localises to the nucleolus. In terms of biological role, non-catalytic subunit of the structure-specific, heterodimeric DNA endonuclease MUS81-EME1 which is involved in the maintenance of genome stability. In the complex, EME1 is required for DNA cleavage, participating in DNA recognition and bending. MUS81-EME1 cleaves 3'-flaps and nicked Holliday junctions, and exhibit limited endonuclease activity with 5' flaps and nicked double-stranded DNAs. Active during prometaphase, MUS81-EME1 resolves mitotic recombination intermediates, including Holliday junctions, which form during homologous recombination. In Homo sapiens (Human), this protein is Structure-specific endonuclease subunit EME1.